The chain runs to 407 residues: MTTAESPATRDTAIFDLIRQEAERQRSGLELIASENFTSAAVREAQGSVLTNKYAEGYPGKRWYGGCEIVDQVEQLAIDRVKELFGAAWANVQPHSGSSANLAVYNALIEPGDTVLGMDLSHGGHLTHGNPVNFSGLRYKIVGYQVNPETELIDMNVVRRLAHEHRPKMIIAGASAYSRSIDFAAFREIADEVGAILFADIAHIAGLIAAGEHPNALPHAHVVASTTHKTLRGPRGGIILSNDLELGAKIDRAVFPGYQGGPLEHVIAAKAVAFGEALRPEFKDYARQVIRNAQALAIAFQQRGYRVVSGGTDNHLLVLDLRAQGLNGTKATKRLDANHITISKSTLPYDTEKILHGGGIRLGTPAVTTRGMTEEHMQVIADLIDRALKGEDVQAEVHDFAGRFPLP.

(6S)-5,6,7,8-tetrahydrofolate-binding positions include L120 and 124 to 126 (GHL). An N6-(pyridoxal phosphate)lysine modification is found at K229.

It belongs to the SHMT family. Homodimer. Pyridoxal 5'-phosphate is required as a cofactor.

Its subcellular location is the cytoplasm. The enzyme catalyses (6R)-5,10-methylene-5,6,7,8-tetrahydrofolate + glycine + H2O = (6S)-5,6,7,8-tetrahydrofolate + L-serine. The protein operates within one-carbon metabolism; tetrahydrofolate interconversion. Its pathway is amino-acid biosynthesis; glycine biosynthesis; glycine from L-serine: step 1/1. Catalyzes the reversible interconversion of serine and glycine with tetrahydrofolate (THF) serving as the one-carbon carrier. This reaction serves as the major source of one-carbon groups required for the biosynthesis of purines, thymidylate, methionine, and other important biomolecules. Also exhibits THF-independent aldolase activity toward beta-hydroxyamino acids, producing glycine and aldehydes, via a retro-aldol mechanism. In Deinococcus deserti (strain DSM 17065 / CIP 109153 / LMG 22923 / VCD115), this protein is Serine hydroxymethyltransferase.